A 644-amino-acid chain; its full sequence is Subversion of eukaryotic traffic protein A (644 aa).

The glucosyltransferase stretch occupies residues 1–400 (MYKIYSYLGW…FHTLLSQVSD (400 aa)). A ptdIns(3)P-binding and localization domain region spans residues 401–644 (PVNPTAHELK…EYDNNHGLRI (244 aa)).

Post-translationally, ubiquitinated and polyubiquitinated when ectopically produced in both yeast and mammalian cells; however it is unsure if this modification occurs during the L.pneumophila infection of host cells.

It localises to the secreted. Functionally, secreted effector that interferes with vesicular trafficking of host cells. Possesses glucohydrolase and mono-O-glucosyltransferase activity by using UDP-glucose as a sugar donor substrate. Is able to glucosylate histones H4 and H3.1 in vitro, but it is unlikely that histones are the natural substrates for SetA. May glycosylate a component of the host cell vesicle trafficking machinery during L.pneumophila infection. Binds with high specificity to phosphatidylinositol 3-phosphate (PtdIns(3)P), (with a dissociation constant value of 809 nM), which guides SetA to the cytosolic leaflet of the early phagosome of the host cell. This Legionella pneumophila subsp. pneumophila (strain Philadelphia 1 / ATCC 33152 / DSM 7513) protein is Subversion of eukaryotic traffic protein A (setA).